Consider the following 291-residue polypeptide: Probable ABC transporter permease protein PH1038 (291 aa).

Helical transmembrane passes span 7–27 (PFFFLLPALTLMVPFVIYPVF), 75–95 (IVWIAIHLPTTIFLGLGFALL), 106–126 (IIKSIIFLGMVIPMVVGGLII), 133–153 (GAGVIPAFFKLIGIEKLAITW), 160–180 (ALFSVILGSIWIWTGFSMLMY), 208–228 (FVIWPLLRPITVVIVAMTLLW), 232–252 (IFDIVYVATGGGPGGASMVLA), and 267–287 (YAAVVAVLLTALTFIPALWLI). Residues 71 to 286 (LIHNIVWIAI…ALTFIPALWL (216 aa)) enclose the ABC transmembrane type-1 domain.

This sequence belongs to the binding-protein-dependent transport system permease family. MalFG subfamily.

It localises to the cell membrane. Its function is as follows. Probably part of a binding-protein-dependent transport system PH1036/38/39. Probably responsible for the translocation of the substrate across the membrane. The chain is Probable ABC transporter permease protein PH1038 from Pyrococcus horikoshii (strain ATCC 700860 / DSM 12428 / JCM 9974 / NBRC 100139 / OT-3).